A 274-amino-acid polypeptide reads, in one-letter code: Type II restriction enzyme HgiBI (274 aa).

The protein belongs to the TdeIII type II restriction endonuclease family.

The catalysed reaction is Endonucleolytic cleavage of DNA to give specific double-stranded fragments with terminal 5'-phosphates.. A P subtype restriction enzyme that recognizes the double-stranded sequence 5'-GGWCC-3' and cleaves after G-1. This system is less active than isoschizomeric RM.HgiEI. This Herpetosiphon aurantiacus (Herpetosiphon giganteus) protein is Type II restriction enzyme HgiBI.